The chain runs to 165 residues: MKAPFRIGQGFDVHALVPGRALIVGGVHIPFERGLLGHSDADVLLHALTDALLGAAGLGDIGRLFPDTDAAHAGADSRVLLREAFAAVRAAGFGVVNVDATVICRAPRILPHAPAMVANIAADLGIDAAAVNIKGKTTEKLGFTGRGEGIAAQVVALLMRHGDET.

A divalent metal cation contacts are provided by Asp-12 and His-14. 4-CDP-2-C-methyl-D-erythritol 2-phosphate-binding positions include 12 to 14 (DVH) and 38 to 39 (HS). His-46 contributes to the a divalent metal cation binding site. 4-CDP-2-C-methyl-D-erythritol 2-phosphate contacts are provided by residues 60-62 (DIG), 65-69 (FPDTD), Phe-143, and Arg-146.

This sequence belongs to the IspF family. In terms of assembly, homotrimer. It depends on a divalent metal cation as a cofactor.

The catalysed reaction is 4-CDP-2-C-methyl-D-erythritol 2-phosphate = 2-C-methyl-D-erythritol 2,4-cyclic diphosphate + CMP. It functions in the pathway isoprenoid biosynthesis; isopentenyl diphosphate biosynthesis via DXP pathway; isopentenyl diphosphate from 1-deoxy-D-xylulose 5-phosphate: step 4/6. Its function is as follows. Involved in the biosynthesis of isopentenyl diphosphate (IPP) and dimethylallyl diphosphate (DMAPP), two major building blocks of isoprenoid compounds. Catalyzes the conversion of 4-diphosphocytidyl-2-C-methyl-D-erythritol 2-phosphate (CDP-ME2P) to 2-C-methyl-D-erythritol 2,4-cyclodiphosphate (ME-CPP) with a corresponding release of cytidine 5-monophosphate (CMP). This chain is 2-C-methyl-D-erythritol 2,4-cyclodiphosphate synthase, found in Aromatoleum aromaticum (strain DSM 19018 / LMG 30748 / EbN1) (Azoarcus sp. (strain EbN1)).